The primary structure comprises 727 residues: E3 ubiquitin-protein ligase LRSAM1 (727 aa).

LRR repeat units lie at residues 30–51 (ADDI…AFAT), 56–77 (QKKV…SCSL), 82–103 (TIKV…MGQL), 105–126 (VLQV…IGNL), 128–150 (QLQT…GELR), and 151–172 (SLRT…LAHV). The tract at residues 227–248 (GAENTQDSPDGPASRFSREEAE) is disordered. S234 is subject to Phosphoserine. 2 coiled-coil regions span residues 241-382 (RFSR…NLRQ) and 469-547 (RQIR…QENY). One can recognise an SAM domain in the interval 569 to 632 (GMERRLVALL…LRRAQDLLAV (64 aa)). S604 bears the Phosphoserine mark. 2 consecutive short sequence motifs (PTAP motif) follow at residues 653 to 656 (PTAP) and 665 to 668 (PSAP). An RING-type zinc finger spans residues 679 to 714 (CVVCLEREAQMVFLTCGHVCCCQQCCQPLRTCPLCR).

In terms of assembly, interacts with TSG101. Interacts with PHF23. Interacts with FUS. Post-translationally, ubiquitination promoted by PHF23 leads to proteasomal degradation. In terms of tissue distribution, widely expressed.

The protein localises to the cytoplasm. It carries out the reaction S-ubiquitinyl-[E2 ubiquitin-conjugating enzyme]-L-cysteine + [acceptor protein]-L-lysine = [E2 ubiquitin-conjugating enzyme]-L-cysteine + N(6)-ubiquitinyl-[acceptor protein]-L-lysine.. The protein operates within protein modification; protein ubiquitination. In terms of biological role, E3 ubiquitin-protein ligase that mediates monoubiquitination of TSG101 at multiple sites, leading to inactivate the ability of TSG101 to sort endocytic (EGF receptors) and exocytic (viral proteins) cargos. Bacterial recognition protein that defends the cytoplasm from invasive pathogens. Localizes to several intracellular bacterial pathogens and generates the bacteria-associated ubiquitin signal leading to autophagy-mediated intracellular bacteria degradation (xenophagy). This Mus musculus (Mouse) protein is E3 ubiquitin-protein ligase LRSAM1.